A 382-amino-acid chain; its full sequence is Kelch domain-containing protein 3 (382 aa).

5 Kelch repeats span residues Arg25–Arg77, Thr88–Lys138, Ile139–Gly189, His191–Gly249, and Leu251–Asp301.

As to quaternary structure, component of a CRL2(KLHDC3) complex, also named ECS(KLHDC3) complex, composed of CUL2, Elongin BC (ELOB and ELOC), RBX1 and substrate-specific adapter KLHDC3. May form oligomers as a KLHDC3-ELOB-ELOC complex; this interaction is likely autoinhibitory for the E3 ligase complex. Expressed specifically in testis, particularly in pachytene spermatocytes.

Its subcellular location is the cytoplasm. It participates in protein modification; protein ubiquitination. Functionally, substrate-recognition component of a Cul2-RING (CRL2) E3 ubiquitin-protein ligase complex of the DesCEND (destruction via C-end degrons) pathway, which recognizes a C-degron located at the extreme C terminus of target proteins, leading to their ubiquitination and degradation. The C-degron recognized by the DesCEND pathway is usually a motif of less than ten residues and can be present in full-length proteins, truncated proteins or proteolytically cleaved forms. The CRL2(KLHDC3) complex specifically recognizes proteins with a glycine (Gly) at the C-terminus, leading to their ubiquitination and degradation: recognizes the C-terminal -Arg-(Xaa)n-Arg-Gly, -Arg-(Xaa)n-Lys-Gly, and -Arg-(Xaa)n-Gln-Gly degrons. The CRL2(KLHDC3) complex mediates ubiquitination and degradation of truncated SELENOV and SEPHS2 selenoproteins produced by failed UGA/Sec decoding, which end with a glycine. May be involved in meiotic recombination process. In Mus musculus (Mouse), this protein is Kelch domain-containing protein 3.